A 648-amino-acid chain; its full sequence is DNA mismatch repair protein MutL (648 aa).

The tract at residues 385-430 (STVKGPAVNEPLTENTLNQQKVKTSASTPVVHTGNSVEPKPETSTA) is disordered. The segment covering 396 to 430 (LTENTLNQQKVKTSASTPVVHTGNSVEPKPETSTA) has biased composition (polar residues).

Belongs to the DNA mismatch repair MutL/HexB family.

Its function is as follows. This protein is involved in the repair of mismatches in DNA. It is required for dam-dependent methyl-directed DNA mismatch repair. May act as a 'molecular matchmaker', a protein that promotes the formation of a stable complex between two or more DNA-binding proteins in an ATP-dependent manner without itself being part of a final effector complex. The chain is DNA mismatch repair protein MutL from Agathobacter rectalis (strain ATCC 33656 / DSM 3377 / JCM 17463 / KCTC 5835 / VPI 0990) (Eubacterium rectale).